Consider the following 133-residue polypeptide: DNA-directed RNA polymerases I, II, and III subunit rpabc2 (133 aa).

Over residues 1 to 32 (MADFEGGGDDGGYEEFDEGGGFEEEYVEETET) the composition is skewed to acidic residues. The interval 1–55 (MADFEGGGDDGGYEEFDEGGGFEEEYVEETETTEAYTDIIDPSADANTAEAGRIP) is disordered.

Belongs to the archaeal Rpo6/eukaryotic RPB6 RNA polymerase subunit family. In terms of assembly, component of the RNA polymerase I (Pol I), RNA polymerase II (Pol II) and RNA polymerase III (Pol III) complexes consisting of at least 13, 12 and 17 subunits, respectively.

The protein localises to the nucleus. Its function is as follows. DNA-dependent RNA polymerases catalyze the transcription of DNA into RNA using the four ribonucleoside triphosphates as substrates. Common component of RNA polymerases I, II and III which synthesize ribosomal RNA precursors, mRNA precursors and many functional non-coding RNAs, and small RNAs, such as 5S rRNA and tRNAs, respectively. Pol II is the central component of the basal RNA polymerase II transcription machinery. Pols are composed of mobile elements that move relative to each other. In Pol II, RPB6 is part of the clamp element and together with parts of RPB1 and RPB2 forms a pocket to which the RPB4-RPB7 subcomplex binds. In Dictyostelium discoideum (Social amoeba), this protein is DNA-directed RNA polymerases I, II, and III subunit rpabc2 (polr2f).